Here is a 1010-residue protein sequence, read N- to C-terminus: Glycine--tRNA ligase (1010 aa).

Residues 1–312 (MSEHPLTLQS…TSESVVPMIS (312 aa)) form a glycine--tRNA ligase alpha subunit region. Positions 313 to 1010 (STEDLLLEIG…SLCHWESVAV (698 aa)) are glycine--tRNA ligase beta subunit.

This sequence belongs to the class-II aminoacyl-tRNA synthetase family.

Its subcellular location is the cytoplasm. It carries out the reaction tRNA(Gly) + glycine + ATP = glycyl-tRNA(Gly) + AMP + diphosphate. The sequence is that of Glycine--tRNA ligase (glyQS) from Chlamydia pneumoniae (Chlamydophila pneumoniae).